Consider the following 260-residue polypeptide: Snake venom serine protease KN6 (260 aa).

The signal sequence occupies residues 1–18 (MVLIRVLANLLILQLSYA). A propeptide spanning residues 19-24 (QKSSEL) is cleaved from the precursor. In terms of domain architecture, Peptidase S1 spans 25–251 (VIGGDECNIN…HLDWIQSIIA (227 aa)). Cystine bridges form between C31–C165, C100–C258, C144–C212, C176–C191, and C202–C227. The active-site Charge relay system is H67. Residue N105 is glycosylated (N-linked (GlcNAc...) asparagine). D112 (charge relay system) is an active-site residue. N172 carries an N-linked (GlcNAc...) asparagine glycan. S206 (charge relay system) is an active-site residue. N-linked (GlcNAc...) asparagine glycosylation is found at N213 and N255.

It belongs to the peptidase S1 family. Snake venom subfamily. In terms of assembly, monomer. In terms of tissue distribution, expressed by the venom gland.

It localises to the secreted. Its function is as follows. Snake venom serine protease that may act in the hemostasis system of the prey. This is Snake venom serine protease KN6 from Trimeresurus stejnegeri (Chinese green tree viper).